A 298-amino-acid polypeptide reads, in one-letter code: S-adenosyl-L-methionine-dependent methyltransferase dpfgK (298 aa).

This sequence belongs to the methyltransferase superfamily.

It participates in secondary metabolite biosynthesis; terpenoid biosynthesis. Functionally, S-adenosyl-L-methionine-dependent methyltransferase; part of the gene cluster that mediates the biosynthesis of diterpenoid pyrones. The first step of the pathway is the synthesis of the alpha-pyrone moiety by the polyketide synthase dpfgA via condensation of one acetyl-CoA starter unit with 3 malonyl-CoA units and 2 methylations. The alpha-pyrone is then combined with geranylgeranyl pyrophosphate (GGPP) formed by the GGPP synthase dpfgD through the action of the prenyltransferase dpfgC to yield a linear alpha-pyrone diterpenoid. Subsequent steps in the diterpenoid pyrone biosynthetic pathway involve the decalin core formation, which is initiated by the epoxidation of the C10-C11 olefin by the FAD-dependent oxidoreductase dpfgE, and is followed by a cyclization cascade catalyzed by the terpene cyclase dpfgB. The short chain dehydrogenase/reductase dpfgG then oxidizes the 8S hydroxy group to a ketone and the short chain dehydrogenase/reductase dpfgH reduces the ketone to the 8R hydroxy group to yield higginsianin B. Higginsianin B is further methylated by the methyltransferase dpfgI to produce the intermediate named FDDP B. The cytochrome P450 monooxygenase dfgpJ then catalyzes a three-step oxidation at C-27 to generate a carboxylic acid as well as C-26 hydroxylation. Finally, methyltransferase dpfgK methylates the carboxylic acid generated by dpfgJ, yielding the final diterpenoid pyrones from the pathway which were named FDDP D and FDDP E. The sequence is that of S-adenosyl-L-methionine-dependent methyltransferase dpfgK from Gibberella zeae (strain ATCC MYA-4620 / CBS 123657 / FGSC 9075 / NRRL 31084 / PH-1) (Wheat head blight fungus).